We begin with the raw amino-acid sequence, 349 residues long: Peroxidase 7 (349 aa).

Positions 1 to 22 (MKLAVVSVVVILGVLVAWPVSA) are cleaved as a signal peptide. Cystine bridges form between cysteine 60–cysteine 136, cysteine 93–cysteine 98, cysteine 142–cysteine 341, and cysteine 220–cysteine 252. The active-site Proton acceptor is histidine 91. Ca(2+) is bound by residues aspartate 92, valine 95, glycine 97, aspartate 99, and serine 101. Proline 183 contacts substrate. Histidine 213 is a binding site for heme b. A Ca(2+)-binding site is contributed by threonine 214. Residue asparagine 231 is glycosylated (N-linked (GlcNAc...) asparagine). 3 residues coordinate Ca(2+): aspartate 262, threonine 265, and aspartate 270.

Belongs to the peroxidase family. Classical plant (class III) peroxidase subfamily. Heme b is required as a cofactor. Requires Ca(2+) as cofactor.

It localises to the secreted. It carries out the reaction 2 a phenolic donor + H2O2 = 2 a phenolic radical donor + 2 H2O. In terms of biological role, removal of H(2)O(2), oxidation of toxic reductants, biosynthesis and degradation of lignin, suberization, auxin catabolism, response to environmental stresses such as wounding, pathogen attack and oxidative stress. These functions might be dependent on each isozyme/isoform in each plant tissue. This chain is Peroxidase 7 (PER7), found in Arabidopsis thaliana (Mouse-ear cress).